We begin with the raw amino-acid sequence, 380 residues long: uncharacterized protein (380 aa).

Positions 251 to 275 (NMSERPPTPSHDTASSSTSTDPNPL) are disordered. Residues 260–272 (SHDTASSSTSTDP) are compositionally biased toward low complexity.

This is an uncharacterized protein from Allium cepa var. aggregatum (Shallot).